A 362-amino-acid polypeptide reads, in one-letter code: Histidine protein methyltransferase 1 homolog (362 aa).

Residues 18-88 are disordered; sequence TSLDDGTCVL…EACKHQPSWK (71 aa). Residues 30–51 are compositionally biased toward basic and acidic residues; that stretch reads QKGKQDKRQSTERPGLPRDHSW. A compositionally biased stretch (polar residues) spans 52-65; it reads KCSSLGNAASSEDT. Phosphoserine is present on residues Ser-62 and Ser-67. A compositionally biased stretch (basic and acidic residues) spans 73 to 82; the sequence is DRSDDPEACK. A Tele-methylhistidine modification is found at His-144. S-adenosyl-L-methionine-binding positions include 158–162, Gly-185, and 206–208; these read IWECT and QDY. The Nuclear localization signal signature appears at 237–243; it reads PDGKRQR. S-adenosyl-L-methionine is bound by residues 259 to 261 and Ser-283; that span reads GEW.

The protein belongs to the methyltransferase superfamily. METTL18 family. Interacts with GRWD1 and members of the heat shock protein 90 and 70 families; these proteins may possibly be methylation substrates for the enzyme. Post-translationally, monomethylated at His-144 through automethylation. Automethylation at His-144 positively regulates the methyltransferase activity toward RPL3. Probably methylated on other residues.

It is found in the cytoplasm. The protein resides in the cytosol. The protein localises to the nucleus. Its subcellular location is the nucleolus. The enzyme catalyses L-histidyl-[protein] + S-adenosyl-L-methionine = N(tele)-methyl-L-histidyl-[protein] + S-adenosyl-L-homocysteine + H(+). In terms of biological role, protein-L-histidine N-tele-methyltransferase that specifically monomethylates RPL3, thereby regulating translation elongation. Histidine methylation of RPL3 regulates translation elongation by slowing ribosome traversal on tyrosine codons: slower elongation provides enough time for proper folding of synthesized proteins and prevents cellular aggregation of tyrosine-rich proteins. This is Histidine protein methyltransferase 1 homolog from Mus musculus (Mouse).